A 632-amino-acid chain; its full sequence is U-box domain-containing protein 14 (632 aa).

In terms of domain architecture, U-box spans 247-321 (VIPEYFRCPI…ALWCESNGIE (75 aa)). ARM repeat units lie at residues 377 to 416 (VDNR…NLSI), 418 to 457 (EGNK…SLSV), 459 to 498 (DENK…NLCI), 500 to 539 (QGNK…ILST), and 541 to 580 (QEGK…YLCI).

Homodimer. Interacts with SNL1. Binds to SD11, SD16, SD17, SD18, SD113, SD129 and SD25. In terms of tissue distribution, expressed in flowers, green siliques, seeds and rosette leaves.

It catalyses the reaction S-ubiquitinyl-[E2 ubiquitin-conjugating enzyme]-L-cysteine + [acceptor protein]-L-lysine = [E2 ubiquitin-conjugating enzyme]-L-cysteine + N(6)-ubiquitinyl-[acceptor protein]-L-lysine.. It functions in the pathway protein modification; protein ubiquitination. In terms of biological role, functions as an E3 ubiquitin ligase with specific E2 ubiquitin-conjugating enzymes. Undergoes auto-ubiquitination. The sequence is that of U-box domain-containing protein 14 (PUB14) from Arabidopsis thaliana (Mouse-ear cress).